We begin with the raw amino-acid sequence, 94 residues long: MLQSNEYFSGKVKSIGFTSSSTGRASVGVMAEGEYTFSTAQPEEMTVVSGALHVLLPGETEWKTYEAGQVFHVPGHSEFHLQVAEPTSYLCRYL.

It belongs to the nucleoside phosphorylase PpnP family.

It carries out the reaction a purine D-ribonucleoside + phosphate = a purine nucleobase + alpha-D-ribose 1-phosphate. It catalyses the reaction adenosine + phosphate = alpha-D-ribose 1-phosphate + adenine. The enzyme catalyses cytidine + phosphate = cytosine + alpha-D-ribose 1-phosphate. The catalysed reaction is guanosine + phosphate = alpha-D-ribose 1-phosphate + guanine. It carries out the reaction inosine + phosphate = alpha-D-ribose 1-phosphate + hypoxanthine. It catalyses the reaction thymidine + phosphate = 2-deoxy-alpha-D-ribose 1-phosphate + thymine. The enzyme catalyses uridine + phosphate = alpha-D-ribose 1-phosphate + uracil. The catalysed reaction is xanthosine + phosphate = alpha-D-ribose 1-phosphate + xanthine. Its function is as follows. Catalyzes the phosphorolysis of diverse nucleosides, yielding D-ribose 1-phosphate and the respective free bases. Can use uridine, adenosine, guanosine, cytidine, thymidine, inosine and xanthosine as substrates. Also catalyzes the reverse reactions. The protein is Pyrimidine/purine nucleoside phosphorylase of Cronobacter sakazakii (strain ATCC BAA-894) (Enterobacter sakazakii).